The following is a 457-amino-acid chain: MEPWPLLLLFSLCSAGLVLGSEHETRLVAKLFKDYSSVVRPVEDHRQVVEVTVGLQLIQLINVDEVNQIVTTNVRLKQQWVDYNLKWNPDDYGGVKKIHIPSEKIWRPDLVLYNNADGDFAIVKFTKVLLQYTGHITWTPPAIFKSYCEIIVTHFPFDEQNCSMKLGTWTYDGSVVAINPESDQPDLSNFMESGEWVIKESRGWKHSVTYSCCPDTPYLDITYHFVMQRLPLYFIVNVIIPCLLFSFLTGLVFYLPTDSGEKMTLSISVLLSLTVFLLVIVELIPSTSSAVPLIGKYMLFTMVFVIASIIITVIVINTHHRSPSTHVMPNWVRKVFIDTIPNIMFFSTMKRPSREKQDKKIFTEDIDISDISGKPGPPPMGFHSPLIKHPEVKSAIEGIKYIAETMKSDQESNNAAAEWKYVAMVMDHILLGVFMLVCIIGTLAVFAGRLIELNQQG.

An N-terminal signal peptide occupies residues 1 to 20; the sequence is MEPWPLLLLFSLCSAGLVLG. The Extracellular segment spans residues 21 to 232; it reads SEHETRLVAK…YHFVMQRLPL (212 aa). 2 disulfides stabilise this stretch: Cys148–Cys162 and Cys212–Cys213. The N-linked (GlcNAc...) asparagine glycan is linked to Asn161. Residues 233-253 form a helical membrane-spanning segment; it reads YFIVNVIIPCLLFSFLTGLVF. Residues 254 to 264 lie on the Cytoplasmic side of the membrane; the sequence is YLPTDSGEKMT. The helical transmembrane segment at 265-285 threads the bilayer; sequence LSISVLLSLTVFLLVIVELIP. Topologically, residues 286-296 are extracellular; it reads STSSAVPLIGK. Residues 297–317 traverse the membrane as a helical segment; the sequence is YMLFTMVFVIASIIITVIVIN. Topologically, residues 318–427 are cytoplasmic; that stretch reads THHRSPSTHV…EWKYVAMVMD (110 aa). The helical transmembrane segment at 428 to 448 threads the bilayer; that stretch reads HILLGVFMLVCIIGTLAVFAG. The Extracellular segment spans residues 449–457; it reads RLIELNQQG.

This sequence belongs to the ligand-gated ion channel (TC 1.A.9) family. Acetylcholine receptor (TC 1.A.9.1) subfamily. Alpha-1/CHRNA1 sub-subfamily. One of the alpha chains that assemble within the acetylcholine receptor, a pentamer of two alpha chains, a beta, a delta, and a gamma (in immature muscle) or epsilon (in mature muscle) chains. The muscle heteropentamer composed of alpha-1, beta-1, delta, epsilon subunits interacts with the alpha-conotoxin ImII. In terms of assembly, is able to interact with other subunits of the acetylcholine receptor but is not assembled into functional acetylcholine-gated cation-selective channels. As to expression, isoform 1 is only expressed in skeletal muscle. Isoform 2 is constitutively expressed in skeletal muscle, brain, heart, kidney, liver, lung and thymus.

It is found in the postsynaptic cell membrane. The protein resides in the cell membrane. It catalyses the reaction K(+)(in) = K(+)(out). It carries out the reaction Na(+)(in) = Na(+)(out). In terms of biological role, upon acetylcholine binding, the AChR responds by an extensive change in conformation that affects all subunits and leads to opening of an ion-conducting channel across the plasma membrane. Functionally, non functional acetylcholine receptor alpha subunit which is not integrated into functional acetylcholine-gated cation-selective channels. The chain is Acetylcholine receptor subunit alpha from Homo sapiens (Human).